Here is a 259-residue protein sequence, read N- to C-terminus: Expansin-B6 (259 aa).

A signal peptide spans 1–24; that stretch reads MASSSHRYFALLALFAVSLKFCYC. N-linked (GlcNAc...) asparagine glycosylation occurs at asparagine 26. One can recognise an Expansin-like EG45 domain in the interval 52-160; sequence GGACGFAVAN…IRVECLYRRT (109 aa). 3 disulfide bridges follow: cysteine 55–cysteine 82, cysteine 85–cysteine 155, and cysteine 90–cysteine 96. Positions 173–254 constitute an Expansin-like CBD domain; the sequence is YYISFVVEYE…NWKPNETYRS (82 aa). Asparagine 249 carries an N-linked (GlcNAc...) asparagine glycan.

It belongs to the expansin family. Expansin B subfamily.

It localises to the secreted. Its subcellular location is the cell wall. The protein resides in the membrane. Functionally, may cause loosening and extension of plant cell walls by disrupting non-covalent bonding between cellulose microfibrils and matrix glucans. The polypeptide is Expansin-B6 (Arabidopsis thaliana (Mouse-ear cress)).